We begin with the raw amino-acid sequence, 419 residues long: MDKFRVQGPTTLQGEVTISGAKNAALPILFAALLAEEPVEIQNVPKLKDVDTSMKLLSQLGAKVERNGSVHIDASQVNVFCAPYDLVKTMRASIWALGPLVARFGQGQVSLPGGCTIGARPVDLHITGLEQLGATIKLEEGYVKASVEGRLKGAHIVMDKVSVGATVTIMCAATLAEGTTIIENAAREPEIVDTANFLVTLGAKIAGQGTDRITIEGVERLGGGVYRVLPDRIETGTFLVAAAISRGKILCRNAQPDTLDAVLAKLRDAGADIEVGEDWISLDMHGKRPKAVNVRTAPHPAFPTDMQAQFTLLNLVAEGTGFITETVFENRFMHVPELSRMGARAEIESNTVICHGIETLSGAQVMATDLRASASLVLAGCIAEGTTIVDRIYHIDRGYERIEDKLRALGANIERVKGE.

Phosphoenolpyruvate is bound at residue 22–23 (KN). Arg91 serves as a coordination point for UDP-N-acetyl-alpha-D-glucosamine. Catalysis depends on Cys115, which acts as the Proton donor. Position 115 is a 2-(S-cysteinyl)pyruvic acid O-phosphothioketal (Cys115). UDP-N-acetyl-alpha-D-glucosamine-binding positions include 120–124 (RPVDL), 160–163 (KVSV), Asp305, and Val327.

This sequence belongs to the EPSP synthase family. MurA subfamily.

It localises to the cytoplasm. It catalyses the reaction phosphoenolpyruvate + UDP-N-acetyl-alpha-D-glucosamine = UDP-N-acetyl-3-O-(1-carboxyvinyl)-alpha-D-glucosamine + phosphate. It functions in the pathway cell wall biogenesis; peptidoglycan biosynthesis. Its function is as follows. Cell wall formation. Adds enolpyruvyl to UDP-N-acetylglucosamine. This chain is UDP-N-acetylglucosamine 1-carboxyvinyltransferase, found in Salmonella dublin (strain CT_02021853).